We begin with the raw amino-acid sequence, 101 residues long: Large ribosomal subunit protein bL20 (101 aa).

This sequence belongs to the bacterial ribosomal protein bL20 family.

In terms of biological role, binds directly to 23S ribosomal RNA and is necessary for the in vitro assembly process of the 50S ribosomal subunit. It is not involved in the protein synthesizing functions of that subunit. This is Large ribosomal subunit protein bL20 (rplT) from Carsonella ruddii (strain PV).